The following is a 151-amino-acid chain: MTESSFKLAIVVSQFNRAVTEKLLNGVLQRLTELGVQANQIKTVWVPGAVEIPLLAKRLAKSKHYQAVVCLGAVIRGETDHYNYVCQQVSFGCQQVALEYEVPIIFGVLTTTTKEQAFARAGGERGNKGADWADAAVSMIKLMKEIEITDE.

5-amino-6-(D-ribitylamino)uracil is bound by residues Phe-15, 49–51, and 73–75; these read AVE and AVI. 78 to 79 serves as a coordination point for (2S)-2-hydroxy-3-oxobutyl phosphate; that stretch reads ET. His-81 (proton donor) is an active-site residue. Phe-106 is a binding site for 5-amino-6-(D-ribitylamino)uracil. A (2S)-2-hydroxy-3-oxobutyl phosphate-binding site is contributed by Arg-120.

Belongs to the DMRL synthase family. As to quaternary structure, forms an icosahedral capsid composed of 60 subunits, arranged as a dodecamer of pentamers.

The enzyme catalyses (2S)-2-hydroxy-3-oxobutyl phosphate + 5-amino-6-(D-ribitylamino)uracil = 6,7-dimethyl-8-(1-D-ribityl)lumazine + phosphate + 2 H2O + H(+). It participates in cofactor biosynthesis; riboflavin biosynthesis; riboflavin from 2-hydroxy-3-oxobutyl phosphate and 5-amino-6-(D-ribitylamino)uracil: step 1/2. Its function is as follows. Catalyzes the formation of 6,7-dimethyl-8-ribityllumazine by condensation of 5-amino-6-(D-ribitylamino)uracil with 3,4-dihydroxy-2-butanone 4-phosphate. This is the penultimate step in the biosynthesis of riboflavin. This Coxiella burnetii (strain CbuG_Q212) (Coxiella burnetii (strain Q212)) protein is 6,7-dimethyl-8-ribityllumazine synthase.